A 100-amino-acid chain; its full sequence is Small ribosomal subunit protein uS14 (100 aa).

This sequence belongs to the universal ribosomal protein uS14 family. In terms of assembly, part of the 30S ribosomal subunit. Contacts proteins S3 and S10.

Binds 16S rRNA, required for the assembly of 30S particles and may also be responsible for determining the conformation of the 16S rRNA at the A site. In Trichormus variabilis (strain ATCC 29413 / PCC 7937) (Anabaena variabilis), this protein is Small ribosomal subunit protein uS14.